Reading from the N-terminus, the 112-residue chain is UPF0375 protein R05A10.4 (112 aa).

Positions 1 to 19 are cleaved as a signal peptide; it reads MNLSIFSAIIFSITIASSA. N59 is a glycosylation site (N-linked (GlcNAc...) asparagine).

Belongs to the UPF0375 family.

The protein resides in the secreted. This chain is UPF0375 protein R05A10.4, found in Caenorhabditis elegans.